We begin with the raw amino-acid sequence, 136 residues long: Diuretic hormone 41 (136 aa).

The N-terminal stretch at 1 to 26 (MMWWAVWCAAMVAGSVFTAAAPPTDS) is a signal peptide. Residues 27 to 76 (IDLMQMDPSLADDESLGFAMQSLSGRYAAAPWLYLLADVSHDPQNGSDRV) constitute a propeptide that is removed on maturation. Ile-119 is subject to Isoleucine amide. Positions 123 to 136 (GFHWAPSAKAAKFY) are excised as a propeptide.

It belongs to the sauvagine/corticotropin-releasing factor/urotensin I family.

Its subcellular location is the secreted. Functionally, regulation of fluid secretion. The protein is Diuretic hormone 41 (dh41) of Bombyx mori (Silk moth).